A 64-amino-acid polypeptide reads, in one-letter code: Large ribosomal subunit protein bL33 (64 aa).

This sequence belongs to the bacterial ribosomal protein bL33 family.

The protein is Large ribosomal subunit protein bL33 of Thermosynechococcus vestitus (strain NIES-2133 / IAM M-273 / BP-1).